The following is a 183-amino-acid chain: Myelin-associated oligodendrocyte basic protein (183 aa).

Positions 68-183 (TRTSRRAKSP…GSPVKASRFW (116 aa)) are disordered. Over residues 69–78 (RTSRRAKSPQ) the composition is skewed to basic residues. Positions 79 to 96 (RPKQQPAAPPAVVRAPAK) are enriched in low complexity. 4 consecutive repeat copies span residues 97–106 (PRSPPRSERQ), 107–116 (PRSPPRSERQ), 117–126 (PRSPPRSERQ), and 127–136 (PRSPPRSERQ). The segment at 97-136 (PRSPPRSERQPRSPPRSERQPRSPPRSERQPRSPPRSERQ) is 4 X 10 AA tandem repeats of P-R-S-P-P-R-S-E-R-Q. S99 and S109 each carry phosphoserine. The span at 101–143 (PRSERQPRSPPRSERQPRSPPRSERQPRSPPRSERQPRPRPEV) shows a compositional bias: basic and acidic residues. Positions 151–164 (RPPQKSKQQPRSSP) are enriched in low complexity.

The protein resides in the cytoplasm. The protein localises to the perinuclear region. Its function is as follows. May play a role in compacting or stabilizing the myelin sheath, possibly by binding the negatively charged acidic phospholipids of the cytoplasmic membrane. In Homo sapiens (Human), this protein is Myelin-associated oligodendrocyte basic protein (MOBP).